The sequence spans 433 residues: GPI mannosyltransferase 2 (433 aa).

9 helical membrane-spanning segments follow: residues 4-24, 109-129, 148-165, 172-194, 204-226, 247-267, 322-342, 354-374, and 410-430; these read LVKP…IISL, TAVI…FYLT, ATFT…GFFT, LSFL…IIPY, FYYT…NCIL, ALLF…RQQF, IPNF…TFYF, LIFI…VQII, and GYIY…VFFL.

It belongs to the PIGV family.

It is found in the endoplasmic reticulum membrane. Its pathway is glycolipid biosynthesis; glycosylphosphatidylinositol-anchor biosynthesis. Functionally, mannosyltransferase involved in glycosylphosphatidylinositol-anchor biosynthesis. Transfers the second mannose to the glycosylphosphatidylinositol during GPI precursor assembly. The chain is GPI mannosyltransferase 2 (GPI18) from Candida glabrata (strain ATCC 2001 / BCRC 20586 / JCM 3761 / NBRC 0622 / NRRL Y-65 / CBS 138) (Yeast).